Consider the following 189-residue polypeptide: Putative biopolymer transport protein ExbB-like 1 (189 aa).

3 helical membrane-spanning segments follow: residues 14 to 34 (FVTTLVLVWISLYLVMTLWVF), 99 to 119 (LVVLSIISSTAPFIGLFGTVV), and 147 to 167 (LIATAAGILAAIPAYSFYLIL).

The protein belongs to the ExbB/TolQ family.

The protein localises to the cell inner membrane. The protein is Putative biopolymer transport protein ExbB-like 1 of Helicobacter pylori (strain J99 / ATCC 700824) (Campylobacter pylori J99).